A 138-amino-acid chain; its full sequence is MVLMRTDPFRDLDRWTQQVLGTRRPAVMPMDAWRDGDQFVVEFDLPGVNADSLDLDVERNVLTVRAERPDLDQNREMVSAERPRGVFSRQLFLGDNLDTDKIEANYHDGVLRLTIPVAEKAKPRRIEINHNHRTAINA.

One can recognise a sHSP domain in the interval 21–131 (GTRRPAVMPM…KPRRIEINHN (111 aa)).

The protein belongs to the small heat shock protein (HSP20) family.

Its function is as follows. Not known. This protein is one of the major immune reactive proteins in mycobacteria. This is 18 kDa antigen 2 from Mycobacterium avium.